A 5043-amino-acid polypeptide reads, in one-letter code: Polyketide synthase PksJ (5043 aa).

Positions Ala-141–Thr-481 are adenylation 1. The Carrier 1 domain occupies Arg-590–Glu-667. Residue Ser-627 is modified to O-(pantetheine 4'-phosphoryl)serine. The segment at Gln-690–Asn-989 is condensation. Positions Thr-1181–Val-1578 are adenylation 2. The 76-residue stretch at Thr-1654–Arg-1729 folds into the Carrier 2 domain. Ser-1689 is modified (O-(pantetheine 4'-phosphoryl)serine). The 427-residue stretch at Asp-1760–Gln-2186 folds into the Ketosynthase family 3 (KS3) 1 domain. Active-site for beta-ketoacyl synthase 1 activity residues include Cys-1932, His-2068, and His-2108. The tract at residues His-2374 to Glu-2499 is N-terminal hotdog fold. The region spanning His-2374 to Thr-2661 is the PKS/mFAS DH domain. His-2403 acts as the Proton acceptor; for dehydratase activity in catalysis. The segment at Gly-2513–Thr-2661 is C-terminal hotdog fold. Asp-2575 (proton donor; for dehydratase activity) is an active-site residue. 2 Carrier domains span residues Arg-3114–Tyr-3188 and Ser-3212–His-3286. 2 positions are modified to O-(pantetheine 4'-phosphoryl)serine: Ser-3148 and Ser-3246. The segment at Val-3291–Thr-3314 is disordered. The Ketosynthase family 3 (KS3) 2 domain maps to Phe-3339–Glu-3779. Active-site for beta-ketoacyl synthase 2 activity residues include Cys-3511, His-3646, and His-3695. Positions Arg-3839 to Glu-3872 form a coiled coil. Residues Gly-4459–Tyr-4536 enclose the Carrier 5 domain. Ser-4496 carries the post-translational modification O-(pantetheine 4'-phosphoryl)serine. The Ketosynthase family 3 (KS3) 3 domain occupies Ala-4588 to Ala-4992. Cys-4743 (for beta-ketoacyl synthase 3 activity) is an active-site residue.

Belongs to the ATP-dependent AMP-binding enzyme family. It depends on pantetheine 4'-phosphate as a cofactor.

Its subcellular location is the cytoplasm. It functions in the pathway antibiotic biosynthesis; bacillaene biosynthesis. In terms of biological role, involved in some intermediate steps for the synthesis of the antibiotic polyketide bacillaene which is involved in secondary metabolism. This Bacillus subtilis (strain 168) protein is Polyketide synthase PksJ (pksJ).